The following is a 392-amino-acid chain: Phosphoglycerate kinase (392 aa).

Substrate-binding positions include 21–23, arginine 36, 59–62, arginine 113, and arginine 146; these read DLN and HLGR. Residues lysine 197, glutamate 319, and 345–348 each bind ATP; that span reads GGDT.

Belongs to the phosphoglycerate kinase family. Monomer.

It localises to the cytoplasm. The catalysed reaction is (2R)-3-phosphoglycerate + ATP = (2R)-3-phospho-glyceroyl phosphate + ADP. It functions in the pathway carbohydrate degradation; glycolysis; pyruvate from D-glyceraldehyde 3-phosphate: step 2/5. In Thioalkalivibrio sulfidiphilus (strain HL-EbGR7), this protein is Phosphoglycerate kinase.